We begin with the raw amino-acid sequence, 606 residues long: NADH-ubiquinone oxidoreductase chain 5 (606 aa).

The next 16 membrane-spanning stretches (helical) occupy residues 4–24 (FSSLTLVTLILLTMPIAAINF), 43–63 (AFITSMIPTMMFIHTGQEMII), 84–104 (FFSMMFVPVALFVTWSIMEFS), 114–134 (INQFFKYLLLFLITMLILVTA), 140–160 (LFIGWEGVGIMSFLLIGWWYG), 171–191 (AILYNRIGDIGFILAMAWFLI), 213–233 (LMGLILAATGKSAQFGLHPWL), 241–261 (TPVSALLHSSTMVVAGIFLLI), 272–292 (FGQSIMLCLGAMTTLFTAMCA), 301–320 (IIAFSTSSQLGLMMVTIGIN), 325–347 (AFLHICTHAFFKAMLFMCSGSII), 366–386 (MPFTTTALIIGSLALTGMPFL), 413–433 (LVATSFTAIYSTRIIFFALLG), 457–477 (LLIGSLFAGFIISNNIPPMTI), 485–505 (YLKMTALTVTILGFILALEIS), and 582–602 (GLIKLYFLSFLITILISTTLL).

It belongs to the complex I subunit 5 family. As to quaternary structure, core subunit of respiratory chain NADH dehydrogenase (Complex I) which is composed of 45 different subunits.

The protein resides in the mitochondrion inner membrane. It carries out the reaction a ubiquinone + NADH + 5 H(+)(in) = a ubiquinol + NAD(+) + 4 H(+)(out). Functionally, core subunit of the mitochondrial membrane respiratory chain NADH dehydrogenase (Complex I) which catalyzes electron transfer from NADH through the respiratory chain, using ubiquinone as an electron acceptor. Essential for the catalytic activity and assembly of complex I. In Ovis aries (Sheep), this protein is NADH-ubiquinone oxidoreductase chain 5 (MT-ND5).